Consider the following 311-residue polypeptide: 4-hydroxy-tetrahydrodipicolinate synthase (311 aa).

Thr49 is a pyruvate binding site. Residue Tyr138 is the Proton donor/acceptor of the active site. Lys166 acts as the Schiff-base intermediate with substrate in catalysis. Residue Val207 participates in pyruvate binding.

The protein belongs to the DapA family. As to quaternary structure, homotetramer; dimer of dimers.

It localises to the cytoplasm. It carries out the reaction L-aspartate 4-semialdehyde + pyruvate = (2S,4S)-4-hydroxy-2,3,4,5-tetrahydrodipicolinate + H2O + H(+). The protein operates within amino-acid biosynthesis; L-lysine biosynthesis via DAP pathway; (S)-tetrahydrodipicolinate from L-aspartate: step 3/4. In terms of biological role, catalyzes the condensation of (S)-aspartate-beta-semialdehyde [(S)-ASA] and pyruvate to 4-hydroxy-tetrahydrodipicolinate (HTPA). The chain is 4-hydroxy-tetrahydrodipicolinate synthase from Lactobacillus helveticus (strain DPC 4571).